A 438-amino-acid chain; its full sequence is GTPase Der (438 aa).

EngA-type G domains follow at residues 3–168 (PLIA…PCPE) and 179–354 (IKLA…INRR). GTP contacts are provided by residues 9 to 16 (GRPNVGKS), 56 to 60 (DTGGY), 120 to 123 (NKVD), 185 to 192 (GRPNVGKS), 232 to 236 (DTAGL), and 297 to 300 (NKWD). Residues 355 to 438 (QKISTSNLNR…LPITMRFLRK (84 aa)) enclose the KH-like domain.

The protein belongs to the TRAFAC class TrmE-Era-EngA-EngB-Septin-like GTPase superfamily. EngA (Der) GTPase family. As to quaternary structure, associates with the 50S ribosomal subunit.

In terms of biological role, GTPase that plays an essential role in the late steps of ribosome biogenesis. The chain is GTPase Der from Chlorobaculum parvum (strain DSM 263 / NCIMB 8327) (Chlorobium vibrioforme subsp. thiosulfatophilum).